A 231-amino-acid polypeptide reads, in one-letter code: 2-C-methyl-D-erythritol 4-phosphate cytidylyltransferase (231 aa).

It belongs to the IspD/TarI cytidylyltransferase family. IspD subfamily.

It carries out the reaction 2-C-methyl-D-erythritol 4-phosphate + CTP + H(+) = 4-CDP-2-C-methyl-D-erythritol + diphosphate. Its pathway is isoprenoid biosynthesis; isopentenyl diphosphate biosynthesis via DXP pathway; isopentenyl diphosphate from 1-deoxy-D-xylulose 5-phosphate: step 2/6. Functionally, catalyzes the formation of 4-diphosphocytidyl-2-C-methyl-D-erythritol from CTP and 2-C-methyl-D-erythritol 4-phosphate (MEP). This Shewanella pealeana (strain ATCC 700345 / ANG-SQ1) protein is 2-C-methyl-D-erythritol 4-phosphate cytidylyltransferase.